A 314-amino-acid polypeptide reads, in one-letter code: MPVKIPDDLPAAEILESENIFVMSETRAANQDIRPMKVLILNLMPNKIETETQLLRLLGNTPLQVDVDLLRIHDKESKHTSIDHMNNFYRDFEAVRQKNYDGLIITGAPLGQIEFEEVSYWDHIREIIDWSQQHVTSVLFLCWAAHAALFHLYGLNRNLLEQKRSGVFVHRRTTQHFPLLRGFDDEFLAPHSRFAEMSLEQLKAHPELQVLTESDTAGAYMVLSRNNRNLFVMGHPEYQKSTLKDEYHRDLEQGLNPDVPQNYFRDDNPEKEPVARWHGHGSLLVSNWLNYYVYQLTPYNLDDMSGITPWENKQ.

Catalysis depends on Cys142, which acts as the Acyl-thioester intermediate. Residues Lys163 and Ser192 each coordinate substrate. His235 functions as the Proton acceptor in the catalytic mechanism. The active site involves Glu237. Arg249 is a substrate binding site.

Belongs to the MetA family.

It localises to the cytoplasm. The enzyme catalyses L-homoserine + succinyl-CoA = O-succinyl-L-homoserine + CoA. It participates in amino-acid biosynthesis; L-methionine biosynthesis via de novo pathway; O-succinyl-L-homoserine from L-homoserine: step 1/1. In terms of biological role, transfers a succinyl group from succinyl-CoA to L-homoserine, forming succinyl-L-homoserine. This Shewanella woodyi (strain ATCC 51908 / MS32) protein is Homoserine O-succinyltransferase.